The following is a 483-amino-acid chain: UDP-N-acetylmuramoyl-L-alanyl-D-glutamate--2,6-diaminopimelate ligase (483 aa).

Residue serine 29 coordinates UDP-N-acetyl-alpha-D-muramoyl-L-alanyl-D-glutamate. Glycine 107–serine 113 contributes to the ATP binding site. UDP-N-acetyl-alpha-D-muramoyl-L-alanyl-D-glutamate-binding positions include threonine 149–threonine 150, serine 176, glutamine 182, and arginine 184. Lysine 216 carries the N6-carboxylysine modification. Meso-2,6-diaminopimelate-binding positions include arginine 380, aspartate 404–arginine 407, glycine 452, and glutamate 456. Residues aspartate 404–arginine 407 carry the Meso-diaminopimelate recognition motif motif.

It belongs to the MurCDEF family. MurE subfamily. Requires Mg(2+) as cofactor. In terms of processing, carboxylation is probably crucial for Mg(2+) binding and, consequently, for the gamma-phosphate positioning of ATP.

The protein resides in the cytoplasm. The enzyme catalyses UDP-N-acetyl-alpha-D-muramoyl-L-alanyl-D-glutamate + meso-2,6-diaminopimelate + ATP = UDP-N-acetyl-alpha-D-muramoyl-L-alanyl-gamma-D-glutamyl-meso-2,6-diaminopimelate + ADP + phosphate + H(+). It participates in cell wall biogenesis; peptidoglycan biosynthesis. Its function is as follows. Catalyzes the addition of meso-diaminopimelic acid to the nucleotide precursor UDP-N-acetylmuramoyl-L-alanyl-D-glutamate (UMAG) in the biosynthesis of bacterial cell-wall peptidoglycan. The chain is UDP-N-acetylmuramoyl-L-alanyl-D-glutamate--2,6-diaminopimelate ligase from Chelativorans sp. (strain BNC1).